The chain runs to 145 residues: 3-hydroxyacyl-[acyl-carrier-protein] dehydratase FabZ (145 aa).

The active site involves His-51.

The protein belongs to the thioester dehydratase family. FabZ subfamily.

It localises to the cytoplasm. The catalysed reaction is a (3R)-hydroxyacyl-[ACP] = a (2E)-enoyl-[ACP] + H2O. Functionally, involved in unsaturated fatty acids biosynthesis. Catalyzes the dehydration of short chain beta-hydroxyacyl-ACPs and long chain saturated and unsaturated beta-hydroxyacyl-ACPs. This chain is 3-hydroxyacyl-[acyl-carrier-protein] dehydratase FabZ, found in Staphylococcus epidermidis (strain ATCC 35984 / DSM 28319 / BCRC 17069 / CCUG 31568 / BM 3577 / RP62A).